Here is a 973-residue protein sequence, read N- to C-terminus: Translation initiation factor IF-2 (973 aa).

Over residues 97 to 135 the composition is skewed to basic and acidic residues; the sequence is GHIDLDGGQHKKQQEEPKAKEEPKVKEEPKVKEEPKVKE. Disordered stretches follow at residues 97 to 343 and 353 to 372; these read GHID…EDVQ and LTNK…DKRD. Over residues 136–155 the composition is skewed to low complexity; it reads APAAPAAQAPVKPAQPAQAP. Composition is skewed to basic and acidic residues over residues 156–175, 183–204, 212–224, and 237–250; these read TEKK…KTVE, PKVE…DDNL, LESK…KIDL, and TKEE…EKQK. Positions 252 to 266 are enriched in low complexity; sequence NNNRPGNNSNGPGAP. Composition is skewed to basic and acidic residues over residues 315-326 and 333-343; these read PNRDDRPNNDRK and VKAEVSEEDVQ. A tr-type G domain is found at 472-642; the sequence is ARPPIVTVMG…LLEADLLDLK (171 aa). The interval 481 to 488 is G1; that stretch reads GHVDHGKT. Residue 481 to 488 coordinates GTP; sequence GHVDHGKT. Residues 506-510 are G2; sequence GITQH. Residues 528–531 form a G3 region; it reads DTPG. Residues 528 to 532 and 582 to 585 each bind GTP; these read DTPGH and NKID. A G4 region spans residues 582–585; it reads NKID. A G5 region spans residues 618 to 620; that stretch reads SAK.

The protein belongs to the TRAFAC class translation factor GTPase superfamily. Classic translation factor GTPase family. IF-2 subfamily.

It is found in the cytoplasm. In terms of biological role, one of the essential components for the initiation of protein synthesis. Protects formylmethionyl-tRNA from spontaneous hydrolysis and promotes its binding to the 30S ribosomal subunits. Also involved in the hydrolysis of GTP during the formation of the 70S ribosomal complex. This Parabacteroides distasonis (strain ATCC 8503 / DSM 20701 / CIP 104284 / JCM 5825 / NCTC 11152) protein is Translation initiation factor IF-2.